A 57-amino-acid chain; its full sequence is Metallothionein (57 aa).

It belongs to the metallothionein superfamily. Type 14 family.

Its function is as follows. This protein complexes cadmium, zinc and copper. This Thermostichus vulcanus (Synechococcus vulcanus) protein is Metallothionein (mtnA).